Consider the following 446-residue polypeptide: Na(+)-translocating NADH-quinone reductase subunit A (446 aa).

The protein belongs to the NqrA family. As to quaternary structure, composed of six subunits; NqrA, NqrB, NqrC, NqrD, NqrE and NqrF.

The catalysed reaction is a ubiquinone + n Na(+)(in) + NADH + H(+) = a ubiquinol + n Na(+)(out) + NAD(+). In terms of biological role, NQR complex catalyzes the reduction of ubiquinone-1 to ubiquinol by two successive reactions, coupled with the transport of Na(+) ions from the cytoplasm to the periplasm. NqrA to NqrE are probably involved in the second step, the conversion of ubisemiquinone to ubiquinol. The sequence is that of Na(+)-translocating NADH-quinone reductase subunit A from Vibrio anguillarum (Listonella anguillarum).